The chain runs to 590 residues: MCGILAVLGCSDDSQAKRVRVLELSRRLKHRGPDWSGLCQHGDCFLSHQRLAIIDPASGDQPLYNEDKSIVVTVNGEIYNHEELRRRLPDHKYRTGSDCEVIAHLYEEHGEDFVDMLDGMFSFVLLDTRNNCFVAARDAVGITPLYIGWGLDGSVWLSSEMKGLNDDCEHFEVFPPGNLYSSRSGSFRRWYNPQWYNETIPSAPYDPLVLRKAFEDAVIKRLMTDVPFGVLLSGGLDSSLVAAVTARHLAGSKAAEQWGTQLHSFCVGLEGSPDLKAAKEVAEYLGTVHHEFHFTVQDGIDAIEDVIFHIETYDVTTIRASTPMFLMARKIKSLGVKMVISGEGSDEIFGGYLYFHKAPNKEEFHHETCRKIKALHQYDCLRANKATSAWGLEARVPFLDKEFMDVAMSIDPESKMIKPDLGRIEKWVLRKAFDDEENPYLPKHILYRQKEQFSDGVGYSWIDGLKAHAAKHVTDRMMLNAARIYPHNTPTTKEAYYYRMIFERFFPQNSARFTVPGGPSIACSTAKAIEWDARWSNNLDPSGRAALGVHDSAYDPPLPSSISAGKGAAMITNKKPRIVDVATPGVVIST.

The active-site For GATase activity is the cysteine 2. A Glutamine amidotransferase type-2 domain is found at cysteine 2 to glycine 185. L-glutamine contacts are provided by residues arginine 50–isoleucine 54, asparagine 75–glutamate 77, and aspartate 98. The Asparagine synthetase domain occupies proline 193–proline 516. ATP is bound by residues leucine 231, valine 267, and serine 341–glycine 342.

It catalyses the reaction L-aspartate + L-glutamine + ATP + H2O = L-asparagine + L-glutamate + AMP + diphosphate + H(+). The protein operates within amino-acid biosynthesis; L-asparagine biosynthesis; L-asparagine from L-aspartate (L-Gln route): step 1/1. This chain is Asparagine synthetase [glutamine-hydrolyzing], found in Asparagus officinalis (Garden asparagus).